We begin with the raw amino-acid sequence, 285 residues long: Energy-coupling factor transporter ATP-binding protein EcfA2 (285 aa).

An ABC transporter domain is found at 3 to 245; sequence IKIENLNHIY…VETLEKIGLA (243 aa). 40–47 is a binding site for ATP; that stretch reads GHTGSGKS.

Belongs to the ABC transporter superfamily. Energy-coupling factor EcfA family. As to quaternary structure, forms a stable energy-coupling factor (ECF) transporter complex composed of 2 membrane-embedded substrate-binding proteins (S component), 2 ATP-binding proteins (A component) and 2 transmembrane proteins (T component).

It localises to the cell membrane. Its function is as follows. ATP-binding (A) component of a common energy-coupling factor (ECF) ABC-transporter complex. Unlike classic ABC transporters this ECF transporter provides the energy necessary to transport a number of different substrates. The polypeptide is Energy-coupling factor transporter ATP-binding protein EcfA2 (Clostridium perfringens (strain 13 / Type A)).